Consider the following 344-residue polypeptide: Nuclear distribution protein nudE-like 1-A (344 aa).

Residues Tyr26–Arg187 adopt a coiled-coil conformation. Residues Leu181–Val190 show a composition bias toward basic and acidic residues. Disordered regions lie at residues Leu181–Ala209 and Pro322–Val344.

This sequence belongs to the nudE family. In terms of processing, phosphorylated in mitosis.

Its subcellular location is the cytoplasm. The protein localises to the cytoskeleton. It is found in the microtubule organizing center. It localises to the centrosome. The protein resides in the spindle. Functionally, required for organization of the cellular microtubule array and microtubule anchoring at the centrosome. Positively regulates the activity of the minus-end directed microtubule motor protein dynein. May enhance dynein-mediated microtubule sliding by targeting dynein to the microtubule plus end. The sequence is that of Nuclear distribution protein nudE-like 1-A (ndel1a) from Danio rerio (Zebrafish).